A 1299-amino-acid chain; its full sequence is Tenascin-N (1299 aa).

The signal sequence occupies residues 1–28 (MSLQEMFRFPMGLLLGSVLLVASAPATL). EGF-like domains follow at residues 167–198 (ERLACPGACSGHGRCVDGRCLCHEPYVGADCG), 199–229 (YPACPENCSGHGECVRGVCQCHEDFMSEDCS), and 230–260 (EKRCPGDCSGHGFCDTGECYCEEGFTGLDCA). Intrachain disulfides connect Cys-171–Cys-181, Cys-175–Cys-186, Cys-188–Cys-197, Cys-202–Cys-212, Cys-206–Cys-217, Cys-219–Cys-228, Cys-233–Cys-243, Cys-237–Cys-248, and Cys-250–Cys-259. 9 Fibronectin type-III domains span residues 264–352 (TPQG…TDLA), 353–444 (VLGT…TEID), 445–532 (SPTN…TEID), 533–623 (SPAN…IDSP), 624–709 (KNLV…TDID), 710–800 (SPQN…IDSP), 801–886 (QNLV…TEID), 887–976 (GPKN…LDPP), and 977–1063 (RNLR…VGAR). The tract at residues 605 to 624 (GDRESKKADTNAPTDIDSPK) is disordered. Over residues 960 to 977 (QESKKADTKAQTELDPPR) the composition is skewed to basic and acidic residues. A disordered region spans residues 960 to 982 (QESKKADTKAQTELDPPRNLRPS). The 218-residue stretch at 1061 to 1278 (GARFPHPSDC…YVELKIRPHG (218 aa)) folds into the Fibrinogen C-terminal domain. Asn-1149 carries an N-linked (GlcNAc...) asparagine glycan.

The protein belongs to the tenascin family. Homohexamer. In terms of tissue distribution, not detected in normal adult mammary tissues or brain but expressed in most breast tumors and brain tumors, such as glioblastomas, astrocytomas and oligodendrogliomas, tested. In brain tumors, detected around the endothelial cell layer of the clood vessels.

The protein localises to the secreted. The protein resides in the extracellular space. Its subcellular location is the extracellular matrix. Its function is as follows. Extracellular matrix protein that seems to be a ligand for ITGA8:ITGB1, ITGAV:ITGB1 and ITGA4:ITGB1. Involved in neurite outgrowth and cell migration in hippocampal explants. During endochondral bone formation, inhibits proliferation and differentiation of proteoblasts mediated by canonical WNT signaling. In tumors, stimulates angiogenesis by elongation, migration and sprouting of endothelial cells. Expressed in most mammary tumors, may facilitate tumorigenesis by supporting the migratory behavior of breast cancer cells. The sequence is that of Tenascin-N from Homo sapiens (Human).